The primary structure comprises 311 residues: Deoxyhypusine hydroxylase (311 aa).

5 HEAT-like PBS-type repeats span residues 69–95, 102–128, 196–222, 228–254, and 261–287; these read LKHE…VLEN, VRHE…YFKN, ERYR…GLDD, FKHE…TLKD, and VRHE…FLND. Residues His-71, Glu-72, His-104, and Glu-105 each coordinate Fe cation. Positions 230, 231, 263, and 264 each coordinate Fe cation.

This sequence belongs to the deoxyhypusine hydroxylase family. Fe(2+) is required as a cofactor.

Its subcellular location is the cytoplasm. It is found in the nucleus. The enzyme catalyses [eIF5A protein]-deoxyhypusine + AH2 + O2 = [eIF5A protein]-hypusine + A + H2O. The protein operates within protein modification; eIF5A hypusination. Catalyzes the hydroxylation of the N(6)-(4-aminobutyl)-L-lysine intermediate to form hypusine, an essential post-translational modification only found in mature eIF-5A factor. This is Deoxyhypusine hydroxylase from Debaryomyces hansenii (strain ATCC 36239 / CBS 767 / BCRC 21394 / JCM 1990 / NBRC 0083 / IGC 2968) (Yeast).